We begin with the raw amino-acid sequence, 146 residues long: Hemoglobin subunit beta (146 aa).

Valine 1 carries the N-acetylvaline modification. A Globin domain is found at 2–146 (HLTGEEKAAV…VANALAHKYH (145 aa)). Threonine 12 bears the Phosphothreonine mark. Residue serine 44 is modified to Phosphoserine. Lysine 59 bears the N6-acetyllysine mark. Histidine 63 is a binding site for heme b. The residue at position 82 (lysine 82) is an N6-acetyllysine. Residue histidine 92 coordinates heme b. Cysteine 93 carries the post-translational modification S-nitrosocysteine. An N6-acetyllysine modification is found at lysine 144.

This sequence belongs to the globin family. In terms of assembly, heterotetramer of two alpha chains and two beta chains. As to expression, red blood cells.

In terms of biological role, involved in oxygen transport from the lung to the various peripheral tissues. This is Hemoglobin subunit beta (HBB) from Aotus trivirgatus (Three-striped night monkey).